The chain runs to 303 residues: N-acetyl-D-glucosamine kinase (303 aa).

ATP-binding positions include 4–11 (GFDIGGTK) and 133–140 (GVGGGLIF). Zn(2+) is bound by residues His-157, Cys-177, Cys-179, and Cys-184.

This sequence belongs to the ROK (NagC/XylR) family. NagK subfamily.

The enzyme catalyses N-acetyl-D-glucosamine + ATP = N-acetyl-D-glucosamine 6-phosphate + ADP + H(+). The protein operates within cell wall biogenesis; peptidoglycan recycling. In terms of biological role, catalyzes the phosphorylation of N-acetyl-D-glucosamine (GlcNAc) derived from cell-wall degradation, yielding GlcNAc-6-P. The sequence is that of N-acetyl-D-glucosamine kinase from Escherichia coli O157:H7.